The sequence spans 195 residues: Coagulogen (195 aa).

Residues 1–20 (MEKKLLGIAILFVTVVSVLA) form the signal peptide. Cystine bridges form between cysteine 28/cysteine 188, cysteine 30/cysteine 115, cysteine 80/cysteine 182, cysteine 85/cysteine 141, cysteine 95/cysteine 189, cysteine 108/cysteine 161, cysteine 147/cysteine 191, and cysteine 155/cysteine 193.

The protein belongs to the coagulin family. In terms of assembly, coagulogen is cleaved after Arg-38 and Arg-66 by a clotting enzyme contained in the hemocyte and activated by a bacterial endotoxin (lipopolysaccharide). This cleavage releases the peptide C and leaves 2 chains of coagulin, A and B, linked by two disulfide bonds. Coagulin molecules interlink to form a gel. In terms of tissue distribution, hemolymph.

It is found in the secreted. Functionally, coagulogen is a gel-forming protein of hemolymph; it hinders the spread of invaders by immobilizing them. This is Coagulogen from Limulus polyphemus (Atlantic horseshoe crab).